We begin with the raw amino-acid sequence, 184 residues long: Photosystem I assembly protein Ycf4 (184 aa).

Helical transmembrane passes span 21–43 and 58–78; these read NFFWACILFLGSLGFFLVGISSY and LFVPQGIVMCFYGIAGLFISS.

The protein belongs to the Ycf4 family.

Its subcellular location is the plastid. It localises to the chloroplast thylakoid membrane. Functionally, seems to be required for the assembly of the photosystem I complex. The sequence is that of Photosystem I assembly protein Ycf4 from Pinus thunbergii (Japanese black pine).